A 286-amino-acid polypeptide reads, in one-letter code: 4-hydroxybenzoate octaprenyltransferase (286 aa).

A run of 9 helical transmembrane segments spans residues 19–39 (AGWL…SHGF), 42–62 (WHLL…GCCV), 92–112 (ALVL…TTNA), 115–135 (IAWS…KRYV), 137–157 (MPQA…FAAV), 161–181 (VPLL…AYDT), 206–226 (FDVA…ALAL), 233–253 (AIYW…GWLI), and 264–284 (AFRL…LSYL).

It belongs to the UbiA prenyltransferase family. Mg(2+) is required as a cofactor.

It is found in the cell inner membrane. The catalysed reaction is all-trans-octaprenyl diphosphate + 4-hydroxybenzoate = 4-hydroxy-3-(all-trans-octaprenyl)benzoate + diphosphate. The protein operates within cofactor biosynthesis; ubiquinone biosynthesis. Catalyzes the prenylation of para-hydroxybenzoate (PHB) with an all-trans polyprenyl group. Mediates the second step in the final reaction sequence of ubiquinone-8 (UQ-8) biosynthesis, which is the condensation of the polyisoprenoid side chain with PHB, generating the first membrane-bound Q intermediate 3-octaprenyl-4-hydroxybenzoate. This is 4-hydroxybenzoate octaprenyltransferase from Polaromonas sp. (strain JS666 / ATCC BAA-500).